The sequence spans 379 residues: MSAIRYELIKTDKQTGARLGKIHTPHGTFDTPMFMPVGTLATVKTMSPEELKAMGAGIILSNTYHLWLRPGEELIREAGGLHKFMNWDQPILTDSGGFQVFSLSKMRDIKEEGVHFRNHLNGDKLFLSPEKAIQIQNALGSDIMMSFDECPPYPASHEYMKKSVERTSRWAERGLKAHERPEDQGLFGIVQGGAYEDLRAQSAKDLVSLDFPGYSIGGLSVGEPKDVMNRVLEHTTPLLPANKPRYLMGVGSPDSLIDGVIRGVDMFDCVLPTRIARNGTCMTSSGRLVIKNAKFTHDFRPIDENCDCYTCKNYSRAYIRHLIRCEETFGIRLTTYHNLHFLLNLMKQVRSAIMEDRLADFREEFFEQYGFNRPDAKNF.

The active-site Proton acceptor is aspartate 94. Residues 94–98, aspartate 148, glutamine 191, and glycine 218 each bind substrate; that span reads DSGGF. Positions 249–255 are RNA binding; sequence GVGSPDS. Aspartate 268 acts as the Nucleophile in catalysis. The interval 273–277 is RNA binding; important for wobble base 34 recognition; that stretch reads TRIAR. Zn(2+) is bound by residues cysteine 306, cysteine 308, cysteine 311, and histidine 337.

It belongs to the queuine tRNA-ribosyltransferase family. As to quaternary structure, homodimer. Within each dimer, one monomer is responsible for RNA recognition and catalysis, while the other monomer binds to the replacement base PreQ1. Requires Zn(2+) as cofactor.

The catalysed reaction is 7-aminomethyl-7-carbaguanine + guanosine(34) in tRNA = 7-aminomethyl-7-carbaguanosine(34) in tRNA + guanine. It participates in tRNA modification; tRNA-queuosine biosynthesis. Its function is as follows. Catalyzes the base-exchange of a guanine (G) residue with the queuine precursor 7-aminomethyl-7-deazaguanine (PreQ1) at position 34 (anticodon wobble position) in tRNAs with GU(N) anticodons (tRNA-Asp, -Asn, -His and -Tyr). Catalysis occurs through a double-displacement mechanism. The nucleophile active site attacks the C1' of nucleotide 34 to detach the guanine base from the RNA, forming a covalent enzyme-RNA intermediate. The proton acceptor active site deprotonates the incoming PreQ1, allowing a nucleophilic attack on the C1' of the ribose to form the product. After dissociation, two additional enzymatic reactions on the tRNA convert PreQ1 to queuine (Q), resulting in the hypermodified nucleoside queuosine (7-(((4,5-cis-dihydroxy-2-cyclopenten-1-yl)amino)methyl)-7-deazaguanosine). The sequence is that of Queuine tRNA-ribosyltransferase from Listeria innocua serovar 6a (strain ATCC BAA-680 / CLIP 11262).